A 506-amino-acid polypeptide reads, in one-letter code: Histidine ammonia-lyase (506 aa).

The 5-imidazolinone (Ala-Gly) cross-link spans 143–145; sequence ASG. A 2,3-didehydroalanine (Ser) modification is found at serine 144.

This sequence belongs to the PAL/histidase family. Post-translationally, contains an active site 4-methylidene-imidazol-5-one (MIO), which is formed autocatalytically by cyclization and dehydration of residues Ala-Ser-Gly.

It localises to the cytoplasm. The catalysed reaction is L-histidine = trans-urocanate + NH4(+). It participates in amino-acid degradation; L-histidine degradation into L-glutamate; N-formimidoyl-L-glutamate from L-histidine: step 1/3. The polypeptide is Histidine ammonia-lyase (Salmonella typhi).